The following is a 1706-amino-acid chain: Histone acetyltransferase HAC12 (1706 aa).

Disordered regions lie at residues 1 to 33, 251 to 284, 397 to 456, and 524 to 543; these read MNVQAHMSGQRSGQVPNQGTVPQNNGNSQMQNL, TNNNSGGFSAEPTIVPQSQQQQQRQHTGGQNSHM, VSRV…LGKT, and QNSQQIQQMMHPQNIGSDSS. Over residues 397–406 the composition is skewed to polar residues; that stretch reads VSRVNSSLSH. The segment covering 407–434 has biased composition (low complexity); the sequence is QQQFQQPPNRFQQQPNQIQQQQQQFLNQ. Residues 637 to 716 form a TAZ-type 1 zinc finger; that stretch reads HDPKFKNQQR…DPRCPVCVPV (80 aa). The interval 791–909 is disordered; the sequence is TESCKSSIVS…PELTSKSRKP (119 aa). The span at 794–805 shows a compositional bias: polar residues; sequence CKSSIVSTTEAD. Composition is skewed to basic and acidic residues over residues 809–829 and 870–896; these read DAERKDHRPLKSETMEVKVEI and PKQENIKMKKEPGWPKKEPGCPKKEEL. A PHD-type zinc finger spans residues 998 to 1075; that stretch reads HYFCIPCYNE…EYTCPYCYVI (78 aa). Residues 1090-1526 enclose the CBP/p300-type HAT domain; the sequence is VLGAKDLPRT…VLYHLHNPTA (437 aa). Residues 1213–1215, 1232–1233, and Trp1288 contribute to the acetyl-CoA site; these read LDS and RT. ZZ-type zinc fingers lie at residues 1408 to 1471 and 1528 to 1581; these read HLQH…IADI and AFVT…SLAD. Zn(2+) is bound by residues Cys1413, Cys1416, Cys1428, Cys1431, Cys1437, Cys1440, His1453, His1461, Cys1533, Cys1536, Cys1548, Cys1551, Cys1557, Cys1560, His1569, and His1571. The TAZ-type 2 zinc-finger motif lies at 1588-1671; the sequence is EARQLRVLQL…ECDVPRCGDL (84 aa).

The protein localises to the nucleus. It catalyses the reaction L-lysyl-[protein] + acetyl-CoA = N(6)-acetyl-L-lysyl-[protein] + CoA + H(+). In terms of biological role, acetyltransferase enzyme. Acetylates histones, giving a specific tag for transcriptional activation. The protein is Histone acetyltransferase HAC12 (HAC12) of Arabidopsis thaliana (Mouse-ear cress).